The chain runs to 213 residues: Small ribosomal subunit protein uS3 (213 aa).

Residues 38–106 (IREYLENRLS…RVHINIVEIK (69 aa)) form the KH type-2 domain.

This sequence belongs to the universal ribosomal protein uS3 family. In terms of assembly, part of the 30S ribosomal subunit. Forms a tight complex with proteins S10 and S14.

Binds the lower part of the 30S subunit head. Binds mRNA in the 70S ribosome, positioning it for translation. The chain is Small ribosomal subunit protein uS3 from Oceanobacillus iheyensis (strain DSM 14371 / CIP 107618 / JCM 11309 / KCTC 3954 / HTE831).